The sequence spans 384 residues: Probable 2-heptyl-3-hydroxy-4(1H)-quinolone synthase AqdB2 (384 aa).

Belongs to the 3-hydroxybenzoate 6-hydroxylase family.

It catalyses the reaction 2-heptyl-4(1H)-quinolone + NADH + O2 + H(+) = 2-heptyl-3-hydroxy-4(1H)-quinolone + NAD(+) + H2O. In terms of biological role, involved in the degradation of the Pseudomonas aeruginosa quorum sensing signal molecule HHQ (2-heptyl-4-quinolone) to anthranilic acid. Probably catalyzes the hydroxylation of HHQ to PQS (2-heptyl-3-hydroxy-4-quinolone). This chain is Probable 2-heptyl-3-hydroxy-4(1H)-quinolone synthase AqdB2, found in Rhodococcus erythropolis (Arthrobacter picolinophilus).